Here is a 590-residue protein sequence, read N- to C-terminus: Laccase-19 (590 aa).

A signal peptide spans 1–28 (MEKLSMVTSLLCAITVAVLAVAVVSGEA). Plastocyanin-like domains lie at 36–152 (VVHE…PRDG) and 161–315 (KDVP…YAGT). N-linked (GlcNAc...) asparagine glycosylation is found at asparagine 41 and asparagine 47. Residues histidine 86 and histidine 88 each coordinate Cu cation. Asparagine 120 is a glycosylation site (N-linked (GlcNAc...) asparagine). The Cu cation site is built by histidine 131 and histidine 133. N-linked (GlcNAc...) asparagine glycosylation is found at asparagine 205, asparagine 344, asparagine 378, asparagine 397, asparagine 434, and asparagine 465. A Plastocyanin-like 3 domain is found at 424–566 (DFPIRPPRPF…ATAFIVEDGP (143 aa)). Positions 483, 486, 488, 545, 546, 547, 551, and 556 each coordinate Cu cation. Positions 565-590 (GPTPETSLPPPPPEFKRCGNNGLSQP) are disordered.

The protein belongs to the multicopper oxidase family. Requires Cu cation as cofactor.

The protein localises to the secreted. It is found in the extracellular space. It localises to the apoplast. It catalyses the reaction 4 hydroquinone + O2 = 4 benzosemiquinone + 2 H2O. Lignin degradation and detoxification of lignin-derived products. This Oryza sativa subsp. japonica (Rice) protein is Laccase-19 (LAC19).